A 326-amino-acid polypeptide reads, in one-letter code: MSNAYPDKHLKLFSLTSNTAIAEKIAKVVGVPLGKLSSRQFSDGEIMINIEESVRGNDIYVIQSTSYPVNNHLWELLIMVDACKRASANSVNVVIPYFGYSRQDRIAAAREPITAKLVANMLVKAGVDRVLTLDLHAVQVQGFFDIPVDNLFTTPLFADHYTNLGLYGEDIVVVSPKNSGIKRARSLAQYLDAPIAIIDYAQDDDSSREEGYIIGEVAGKKAILIDDILNTGKTFAESAKIVERGGATEIYAVASHGLFASGATEILQAAPIKDILITDSVYTEQELPSNLHYLSASELIGEAIIRIHERRPVSPLFAYNRKGDEA.

ATP contacts are provided by residues 43-45 and 102-103; these read DGE and RQ. H136 contacts Mg(2+). Residues D226 and 230 to 234 each bind D-ribose 5-phosphate; that span reads NTGKT.

This sequence belongs to the ribose-phosphate pyrophosphokinase family. Class I subfamily. In terms of assembly, homohexamer. Mg(2+) is required as a cofactor.

Its subcellular location is the cytoplasm. It carries out the reaction D-ribose 5-phosphate + ATP = 5-phospho-alpha-D-ribose 1-diphosphate + AMP + H(+). Its pathway is metabolic intermediate biosynthesis; 5-phospho-alpha-D-ribose 1-diphosphate biosynthesis; 5-phospho-alpha-D-ribose 1-diphosphate from D-ribose 5-phosphate (route I): step 1/1. In terms of biological role, involved in the biosynthesis of the central metabolite phospho-alpha-D-ribosyl-1-pyrophosphate (PRPP) via the transfer of pyrophosphoryl group from ATP to 1-hydroxyl of ribose-5-phosphate (Rib-5-P). The polypeptide is Putative ribose-phosphate pyrophosphokinase 2 (Streptococcus mutans serotype c (strain ATCC 700610 / UA159)).